We begin with the raw amino-acid sequence, 420 residues long: MTLSDFIGALKDNPYFGAGFGLVGVGTALAVARKGAQVGMIFFRRHYMITLEVPSKDKSYHWLLSWITKHAKHTQHLSVETSYMQHESGKVHTQFDFHPSPGNHIIWYGRKWIRVERVREKQMMDLHTGTPWESVTFTALGRDRQTFFNILQEARELALKQEEGRTVMYTAMGAEWRPFGFPRRRRPLSSVVLESGVAERIVDDVKEFIGNPKWYTDRGIPYRRGYLLYGPPGCGKSSFITALAGELGYSICLMSLSDRSLSDDRLNHLLSVAPQQSIILLEDVDAAFVSRELLPTENPLAYQGMGRLTFSGLLNALDGVASSEARIVFMTTNFIERLDPALVRPGRVDLKQYVGHCSHWQLTQMFRRFYPQESAAEADHFSEQALAAHTDLSAAQVQGHFMLYKTDPAGAIKNIAEIKD.

The Mitochondrial intermembrane segment spans residues 1-15 (MTLSDFIGALKDNPY). A helical membrane pass occupies residues 16–32 (FGAGFGLVGVGTALAVA). The Mitochondrial matrix segment spans residues 33–420 (RKGAQVGMIF…AIKNIAEIKD (388 aa)). Position 230-237 (230-237 (GPPGCGKS)) interacts with ATP.

The protein belongs to the AAA ATPase family. BCS1 subfamily.

The protein localises to the mitochondrion inner membrane. The catalysed reaction is ATP + H2O = ADP + phosphate + H(+). Chaperone necessary for the incorporation of Rieske iron-sulfur protein uqcrfs1 into the mitochondrial respiratory chain complex III. This chain is Mitochondrial chaperone BCS1 (bcs1l), found in Danio rerio (Zebrafish).